The chain runs to 201 residues: Retinol-binding protein 4 (201 aa).

The first 18 residues, 1–18 (MEWVWALVVLAALGSAGA), serve as a signal peptide directing secretion. 3 disulfides stabilise this stretch: cysteine 22/cysteine 178, cysteine 88/cysteine 192, and cysteine 138/cysteine 147. A substrate-binding site is contributed by glutamine 116. An Omega-N-methylarginine modification is found at arginine 139.

It belongs to the calycin superfamily. Lipocalin family. As to quaternary structure, interacts with TTR. Interaction with TTR prevents its loss by filtration through the kidney glomeruli. Interacts with STRA6.

The protein localises to the secreted. In terms of biological role, retinol-binding protein that mediates retinol transport in blood plasma. Delivers retinol from the liver stores to the peripheral tissues. Transfers the bound all-trans retinol to STRA6, that then facilitates retinol transport across the cell membrane. The chain is Retinol-binding protein 4 (RBP4) from Equus caballus (Horse).